Reading from the N-terminus, the 201-residue chain is Ribonuclease HII (201 aa).

One can recognise an RNase H type-2 domain in the interval 10–200; that stretch reads LIEAGCDEAG…LGDGQLELFS (191 aa). Positions 16, 17, and 108 each coordinate a divalent metal cation.

The protein belongs to the RNase HII family. The cofactor is Mn(2+). Requires Mg(2+) as cofactor.

The protein localises to the cytoplasm. It carries out the reaction Endonucleolytic cleavage to 5'-phosphomonoester.. Functionally, endonuclease that specifically degrades the RNA of RNA-DNA hybrids. In Bacteroides fragilis (strain ATCC 25285 / DSM 2151 / CCUG 4856 / JCM 11019 / LMG 10263 / NCTC 9343 / Onslow / VPI 2553 / EN-2), this protein is Ribonuclease HII.